We begin with the raw amino-acid sequence, 418 residues long: Arginine deiminase (418 aa).

Catalysis depends on cysteine 406, which acts as the Amidino-cysteine intermediate.

This sequence belongs to the arginine deiminase family.

The protein resides in the cytoplasm. The catalysed reaction is L-arginine + H2O = L-citrulline + NH4(+). The protein operates within amino-acid degradation; L-arginine degradation via ADI pathway; carbamoyl phosphate from L-arginine: step 1/2. In Lentilactobacillus hilgardii (Lactobacillus hilgardii), this protein is Arginine deiminase.